The sequence spans 98 residues: NADH-ubiquinone oxidoreductase chain 4L (98 aa).

A run of 3 helical transmembrane segments spans residues 1–21 (MSMV…GLLM), 29–49 (SLLC…VTIL), and 61–81 (IILL…LVMV).

It belongs to the complex I subunit 4L family. As to quaternary structure, core subunit of respiratory chain NADH dehydrogenase (Complex I) which is composed of 45 different subunits.

It localises to the mitochondrion inner membrane. The enzyme catalyses a ubiquinone + NADH + 5 H(+)(in) = a ubiquinol + NAD(+) + 4 H(+)(out). In terms of biological role, core subunit of the mitochondrial membrane respiratory chain NADH dehydrogenase (Complex I) which catalyzes electron transfer from NADH through the respiratory chain, using ubiquinone as an electron acceptor. Part of the enzyme membrane arm which is embedded in the lipid bilayer and involved in proton translocation. The protein is NADH-ubiquinone oxidoreductase chain 4L (MT-ND4L) of Eumetopias jubatus (Steller sea lion).